The primary structure comprises 290 residues: MSIISTKYLLQDAQTKGYAVPAFNIHNAETIQAILEVCSEMQSPVILAGTPGTFKHIALEEIYALCSAYSNSYDIPLALHLDHHESLEDIRRKVNAGVRSAMIDGSHFPFEENVKLVKSVVDFCHARDCSVEAELGRLGGVEDDMSVDAESAFLTDPQEAKRFVELTGVDSLAVAIGTAHGLYTKCPKIDFQRLAEIREVVDIPLVLHGASDVPDEYVRRTIELGVCKVNVATELKIAFADAVKKWFAENPDGNDPRYYMRVGMDAMKDVVRSKITVCGSYKKLLQPSHC.

Asp-82 serves as the catalytic Proton donor. Zn(2+) contacts are provided by His-83 and His-180. Position 181 (Gly-181) interacts with dihydroxyacetone phosphate. A Zn(2+)-binding site is contributed by His-208. Dihydroxyacetone phosphate is bound by residues 209–211 (GAS) and 230–233 (NVAT).

It belongs to the class II fructose-bisphosphate aldolase family. TagBP aldolase KbaY subfamily. In terms of assembly, homotetramer. Forms a complex with KbaZ. Requires Zn(2+) as cofactor.

The catalysed reaction is D-tagatofuranose 1,6-bisphosphate = D-glyceraldehyde 3-phosphate + dihydroxyacetone phosphate. It participates in carbohydrate metabolism; D-tagatose 6-phosphate degradation; D-glyceraldehyde 3-phosphate and glycerone phosphate from D-tagatose 6-phosphate: step 2/2. In terms of biological role, catalytic subunit of the tagatose-1,6-bisphosphate aldolase KbaYZ, which catalyzes the reversible aldol condensation of dihydroxyacetone phosphate (DHAP or glycerone-phosphate) with glyceraldehyde 3-phosphate (G3P) to produce tagatose 1,6-bisphosphate (TBP). Requires KbaZ subunit for full activity and stability. This Citrobacter koseri (strain ATCC BAA-895 / CDC 4225-83 / SGSC4696) protein is D-tagatose-1,6-bisphosphate aldolase subunit KbaY.